Here is a 702-residue protein sequence, read N- to C-terminus: Elongation factor G 2 (702 aa).

A tr-type G domain is found at 8–291; that stretch reads ELYRNIGIVA…AVIDYLPAPS (284 aa). Residues 17–24, 89–93, and 143–146 contribute to the GTP site; these read AHVDAGKT, DTPGH, and NKMD. Residues 293-314 are disordered; the sequence is IPAIRGTDPDDEEKHDERHADD.

It belongs to the TRAFAC class translation factor GTPase superfamily. Classic translation factor GTPase family. EF-G/EF-2 subfamily.

It is found in the cytoplasm. In terms of biological role, catalyzes the GTP-dependent ribosomal translocation step during translation elongation. During this step, the ribosome changes from the pre-translocational (PRE) to the post-translocational (POST) state as the newly formed A-site-bound peptidyl-tRNA and P-site-bound deacylated tRNA move to the P and E sites, respectively. Catalyzes the coordinated movement of the two tRNA molecules, the mRNA and conformational changes in the ribosome. This is Elongation factor G 2 (fusB) from Pseudomonas aeruginosa (strain ATCC 15692 / DSM 22644 / CIP 104116 / JCM 14847 / LMG 12228 / 1C / PRS 101 / PAO1).